Reading from the N-terminus, the 274-residue chain is NAD-dependent protein deacetylase (274 aa).

The 274-residue stretch at Met-1 to Ser-274 folds into the Deacetylase sirtuin-type domain. NAD(+) contacts are provided by residues Gly-26–Lys-46 and Gln-104–Asp-107. The active-site Proton acceptor is His-122. Residues Cys-130, Cys-133, Cys-181, and Cys-184 each coordinate Zn(2+). Residues Gly-221 to Ser-223, Asn-247 to Gly-249, and Cys-265 each bind NAD(+).

This sequence belongs to the sirtuin family. Class II subfamily. It depends on Zn(2+) as a cofactor.

The protein localises to the cytoplasm. The catalysed reaction is N(6)-acetyl-L-lysyl-[protein] + NAD(+) + H2O = 2''-O-acetyl-ADP-D-ribose + nicotinamide + L-lysyl-[protein]. NAD-dependent protein deacetylase which modulates the activities of several enzymes which are inactive in their acetylated form. The polypeptide is NAD-dependent protein deacetylase (Bordetella bronchiseptica (strain ATCC BAA-588 / NCTC 13252 / RB50) (Alcaligenes bronchisepticus)).